The following is a 461-amino-acid chain: Bifunctional protein GlmU (461 aa).

The interval Met-1–Arg-227 is pyrophosphorylase. UDP-N-acetyl-alpha-D-glucosamine contacts are provided by residues Leu-8–Gly-11, Lys-22, Gln-73, Gly-78–Thr-79, Tyr-100–Asp-102, Gly-137, Glu-152, Asn-167, and Asn-225. Asp-102 serves as a coordination point for Mg(2+). Asn-225 contacts Mg(2+). Residues Arg-228 to Arg-248 form a linker region. Residues Gly-249 to Glu-461 are N-acetyltransferase. 2 residues coordinate UDP-N-acetyl-alpha-D-glucosamine: Arg-332 and Lys-350. The Proton acceptor role is filled by His-362. UDP-N-acetyl-alpha-D-glucosamine is bound by residues Tyr-365 and Asn-376. Acetyl-CoA-binding positions include Ala-379, Asn-385–Tyr-386, Ser-404, Ala-422, and Arg-439.

This sequence in the N-terminal section; belongs to the N-acetylglucosamine-1-phosphate uridyltransferase family. In the C-terminal section; belongs to the transferase hexapeptide repeat family. Homotrimer. It depends on Mg(2+) as a cofactor.

Its subcellular location is the cytoplasm. It catalyses the reaction alpha-D-glucosamine 1-phosphate + acetyl-CoA = N-acetyl-alpha-D-glucosamine 1-phosphate + CoA + H(+). It carries out the reaction N-acetyl-alpha-D-glucosamine 1-phosphate + UTP + H(+) = UDP-N-acetyl-alpha-D-glucosamine + diphosphate. Its pathway is nucleotide-sugar biosynthesis; UDP-N-acetyl-alpha-D-glucosamine biosynthesis; N-acetyl-alpha-D-glucosamine 1-phosphate from alpha-D-glucosamine 6-phosphate (route II): step 2/2. It participates in nucleotide-sugar biosynthesis; UDP-N-acetyl-alpha-D-glucosamine biosynthesis; UDP-N-acetyl-alpha-D-glucosamine from N-acetyl-alpha-D-glucosamine 1-phosphate: step 1/1. It functions in the pathway bacterial outer membrane biogenesis; LPS lipid A biosynthesis. Its function is as follows. Catalyzes the last two sequential reactions in the de novo biosynthetic pathway for UDP-N-acetylglucosamine (UDP-GlcNAc). The C-terminal domain catalyzes the transfer of acetyl group from acetyl coenzyme A to glucosamine-1-phosphate (GlcN-1-P) to produce N-acetylglucosamine-1-phosphate (GlcNAc-1-P), which is converted into UDP-GlcNAc by the transfer of uridine 5-monophosphate (from uridine 5-triphosphate), a reaction catalyzed by the N-terminal domain. The chain is Bifunctional protein GlmU from Methylococcus capsulatus (strain ATCC 33009 / NCIMB 11132 / Bath).